We begin with the raw amino-acid sequence, 242 residues long: Transcription factor bHLH100 (242 aa).

Residues 61-113 form the bHLH domain; that stretch reads MKKLNHNASERERRKKINTMFSSLRSCLPPTNQTKKLSVSATVSQALKYIPEL.

In terms of assembly, homodimer. In terms of tissue distribution, expressed constitutively in roots, leaves, and stems.

It is found in the nucleus. Functionally, plays a role in metal homeostasis. Confers tolerance to high zinc (Zn) and nickel (Ni). This is Transcription factor bHLH100 (BHLH100) from Arabidopsis thaliana (Mouse-ear cress).